An 84-amino-acid chain; its full sequence is Large ribosomal subunit protein bL31B (84 aa).

This sequence belongs to the bacterial ribosomal protein bL31 family. Type B subfamily. As to quaternary structure, part of the 50S ribosomal subunit.

The chain is Large ribosomal subunit protein bL31B from Photorhabdus laumondii subsp. laumondii (strain DSM 15139 / CIP 105565 / TT01) (Photorhabdus luminescens subsp. laumondii).